The sequence spans 114 residues: Ferredoxin (114 aa).

Residues Cys-9 and Cys-17 each coordinate [3Fe-4S] cluster. [4Fe-4S] cluster-binding residues include Cys-21, Cys-40, Cys-43, and Cys-46. Positions 31–60 (RMLYINPDECVDCGACKPACRVEAIYWEGD) constitute a 4Fe-4S ferredoxin-type domain. Cys-50 contributes to the [3Fe-4S] cluster binding site.

The cofactor is [4Fe-4S] cluster. [3Fe-4S] cluster serves as cofactor.

Its function is as follows. Ferredoxins are iron-sulfur proteins that transfer electrons in a wide variety of metabolic reactions. The polypeptide is Ferredoxin (fdxA) (Mycobacterium tuberculosis (strain ATCC 25618 / H37Rv)).